We begin with the raw amino-acid sequence, 294 residues long: Cutinase (294 aa).

The N-terminal stretch at 1–33 (MLRARPSHRLASAAAVVAATGAALLAGSSPAAA) is a signal peptide. Cysteines 36 and 107 form a disulfide. The Nucleophile role is filled by S118. Cysteines 180 and 187 form a disulfide. The active site involves D184. The active-site Proton donor/acceptor is H198. Residues 222-241 (GTPTTPTPTPTPTPVPTTCV) are disordered. The span at 226–236 (TPTPTPTPTPV) shows a compositional bias: pro residues. The tract at residues 240-294 (CVRDSTRDHVAADRAVSLYGRAYARGSRDSLGATSSYNVVSLQQVEGGWRLVTAC) is may be involved in substrate binding.

The protein belongs to the cutinase family.

It is found in the secreted. The enzyme catalyses cutin + H2O = cutin monomers.. It catalyses the reaction a tetradecanoate ester + H2O = an aliphatic alcohol + tetradecanoate + H(+). The catalysed reaction is hexadecanoate ester + H2O = an aliphatic alcohol + hexadecanoate + H(+). It carries out the reaction a butanoate ester + H2O = an aliphatic alcohol + butanoate + H(+). The enzyme catalyses an octanoate ester + H2O = an aliphatic alcohol + octanoate + H(+). In terms of biological role, catalyzes the hydrolysis of cutin, a polyester that forms the structure of plant cuticle. Shows esterase activity towards p-nitrophenol-linked aliphatic esters (pNP-aliphatic esters). Can depolymerize synthetic polyesters such as poly(epsilon-caprolactone) (PCL) and poly(1,3-propylene adipate) (PPA). Exhibits some activity on poly(lactic acid) (PLA). Can bind but not hydrolyze poly(hydroxybutyrate) (PHB). The protein is Cutinase of Kineococcus radiotolerans (strain ATCC BAA-149 / DSM 14245 / SRS30216).